We begin with the raw amino-acid sequence, 36 residues long: ACKDNFAAATCKHVKENKNCGSQKYATNCAKTCGKC.

The region spanning 2–36 (CKDNFAAATCKHVKENKNCGSQKYATNCAKTCGKC) is the ShKT domain. Disulfide bonds link cysteine 2–cysteine 36, cysteine 11–cysteine 29, and cysteine 20–cysteine 33. A crucial for binding to potassium channels region spans residues 24-25 (KY).

Belongs to the sea anemone type 1 potassium channel toxin family. Type 1b subfamily.

It localises to the secreted. Its subcellular location is the nematocyst. Blocks voltage-gated potassium channels Kv1.2/KCNA2 (IC(50)=140 nM). The protein is Kappa-actitoxin-Avd6a of Anemonia sulcata (Mediterranean snakelocks sea anemone).